We begin with the raw amino-acid sequence, 122 residues long: MFLTFSMCVNWIIVKMPNRSEELDRLLDKIINSPHRTEASKTLQEIENNQSYILNVQLKKLLRLHDDSFKNKCVSPINYMLEKYTPYMGHTEALQKEAELVDRDLRIIEMTYQLIKKNRNSK.

Ser33 carries the post-translational modification Phosphoserine.

Belongs to the BLOC1S1 family. In terms of assembly, component of the biogenesis of lysosome-related organelles complex-1 (BLOC-1) composed of at least BLI1, BLS1, CNL1, KXD1, SNN1 and VAB2.

It is found in the endosome. In terms of biological role, component of the biogenesis of lysosome-related organelles complex-1 (BLOC-1), a complex involved in endosomal cargo sorting. This Saccharomyces cerevisiae (strain YJM789) (Baker's yeast) protein is Biogenesis of lysosome-related organelles complex 1 subunit BLS1 (BLS1).